We begin with the raw amino-acid sequence, 188 residues long: Elongation factor P (188 aa).

It belongs to the elongation factor P family.

It localises to the cytoplasm. It participates in protein biosynthesis; polypeptide chain elongation. Involved in peptide bond synthesis. Stimulates efficient translation and peptide-bond synthesis on native or reconstituted 70S ribosomes in vitro. Probably functions indirectly by altering the affinity of the ribosome for aminoacyl-tRNA, thus increasing their reactivity as acceptors for peptidyl transferase. This Chlorobium chlorochromatii (strain CaD3) protein is Elongation factor P.